A 129-amino-acid polypeptide reads, in one-letter code: Small ribosomal subunit protein uS11 (129 aa).

Belongs to the universal ribosomal protein uS11 family. As to quaternary structure, part of the 30S ribosomal subunit. Interacts with proteins S7 and S18. Binds to IF-3.

In terms of biological role, located on the platform of the 30S subunit, it bridges several disparate RNA helices of the 16S rRNA. Forms part of the Shine-Dalgarno cleft in the 70S ribosome. In Rhizobium etli (strain CIAT 652), this protein is Small ribosomal subunit protein uS11.